The chain runs to 376 residues: Protein XRP2 (376 aa).

Positions 1–55 (MGCFFSKKSRRKSPKKDAALPTGDESATGNDLAETNNTALGSNSNQEAPKQYSWD) are disordered. G2 carries the N-myristoyl glycine lipid modification. Residue C3 is the site of S-palmitoyl cysteine attachment. The span at 25–48 (ESATGNDLAETNNTALGSNSNQEA) shows a compositional bias: polar residues. The C-CAP/cofactor C-like domain occupies 49–204 (PKQYSWDKRE…NWSNIHDFTP (156 aa)). GTP-binding positions include 123–124 (GS) and 140–143 (QQFR).

The protein belongs to the TBCC family. In terms of processing, myristoylated on Gly-2; which may be required for membrane targeting. Post-translationally, palmitoylated on Cys-3; which may be required for plasma membrane targeting. In the retina, detected in both rod and cone photoreceptors (at protein level). Has strongest expression in the retinal outer nuclear layer (ONL) and weaker expression in the outer plexiform layer (OPL) and inner plexiform layer (IPL) (at protein level). Expressed in all tissues tested.

It is found in the cell membrane. It localises to the cell projection. The protein resides in the cilium. Functionally, acts as a GTPase-activating protein (GAP) involved in trafficking between the Golgi and the ciliary membrane. Acts as a GTPase-activating protein (GAP) for tubulin in concert with tubulin-specific chaperone C, but does not enhance tubulin heterodimerization. In the retina, required for maintenance of rod and cone photoreceptor cells. May have a role in normal retinal localization of the transducins GNB1 and GNAT1, and the rhodopsin kinase GRK1. The sequence is that of Protein XRP2 from Danio rerio (Zebrafish).